Reading from the N-terminus, the 150-residue chain is MDSTNSKREFIKSALEANINRRAAVSLFDRFGGSSAVFEKQFQDAQHAVRAHGALKREAELGTLVRKAGQRFEALKRERSILRQPRDLPRVADIDALVDAVADLKEEVAVRLDALEENGEETPTHSSSEIKDTIVRWRLDDLPPVCPETP.

The protein is Protein ORF35 (ORF35) of Homo sapiens (Human).